We begin with the raw amino-acid sequence, 430 residues long: Argininosuccinate lyase (430 aa).

Belongs to the lyase 1 family. Argininosuccinate lyase subfamily.

The protein localises to the cytoplasm. The catalysed reaction is 2-(N(omega)-L-arginino)succinate = fumarate + L-arginine. Its pathway is amino-acid biosynthesis; L-arginine biosynthesis; L-arginine from L-ornithine and carbamoyl phosphate: step 3/3. The polypeptide is Argininosuccinate lyase (Sorangium cellulosum (strain So ce56) (Polyangium cellulosum (strain So ce56))).